The following is a 118-amino-acid chain: Large ribosomal subunit protein bL20 (118 aa).

Belongs to the bacterial ribosomal protein bL20 family.

Binds directly to 23S ribosomal RNA and is necessary for the in vitro assembly process of the 50S ribosomal subunit. It is not involved in the protein synthesizing functions of that subunit. The chain is Large ribosomal subunit protein bL20 from Francisella tularensis subsp. holarctica (strain FTNF002-00 / FTA).